Consider the following 341-residue polypeptide: NADH-quinone oxidoreductase subunit H 1 (341 aa).

8 helical membrane passes run 13-33, 82-102, 115-135, 161-181, 190-210, 248-268, 277-297, and 313-333; these read LVVI…IAYI, GLFL…WAVI, VGVL…IMAG, IGFV…TAIV, MLGW…VSAL, YVAI…GWLP, WVPG…LFAM, and LGWK…ASVL.

Belongs to the complex I subunit 1 family. As to quaternary structure, NDH-1 is composed of 14 different subunits. Subunits NuoA, H, J, K, L, M, N constitute the membrane sector of the complex.

It localises to the cell inner membrane. The enzyme catalyses a quinone + NADH + 5 H(+)(in) = a quinol + NAD(+) + 4 H(+)(out). Its function is as follows. NDH-1 shuttles electrons from NADH, via FMN and iron-sulfur (Fe-S) centers, to quinones in the respiratory chain. The immediate electron acceptor for the enzyme in this species is believed to be ubiquinone. Couples the redox reaction to proton translocation (for every two electrons transferred, four hydrogen ions are translocated across the cytoplasmic membrane), and thus conserves the redox energy in a proton gradient. This subunit may bind ubiquinone. The chain is NADH-quinone oxidoreductase subunit H 1 from Rhodopseudomonas palustris (strain ATCC BAA-98 / CGA009).